A 246-amino-acid polypeptide reads, in one-letter code: Uridylate kinase (246 aa).

20–23 (KISG) provides a ligand contact to ATP. The interval 28–33 (GDQGYG) is involved in allosteric activation by GTP. A UMP-binding site is contributed by glycine 62. Residues glycine 63 and arginine 67 each contribute to the ATP site. UMP contacts are provided by residues aspartate 82 and 143–150 (TGNPYFTT). 3 residues coordinate ATP: threonine 170, tyrosine 176, and aspartate 179.

It belongs to the UMP kinase family. As to quaternary structure, homohexamer.

It localises to the cytoplasm. It catalyses the reaction UMP + ATP = UDP + ADP. It participates in pyrimidine metabolism; CTP biosynthesis via de novo pathway; UDP from UMP (UMPK route): step 1/1. Allosterically activated by GTP. Inhibited by UTP. In terms of biological role, catalyzes the reversible phosphorylation of UMP to UDP. The polypeptide is Uridylate kinase (Cereibacter sphaeroides (strain ATCC 17029 / ATH 2.4.9) (Rhodobacter sphaeroides)).